A 358-amino-acid chain; its full sequence is Peptide chain release factor 1 (358 aa).

Gln-235 is subject to N5-methylglutamine.

This sequence belongs to the prokaryotic/mitochondrial release factor family. In terms of processing, methylated by PrmC. Methylation increases the termination efficiency of RF1.

The protein localises to the cytoplasm. Its function is as follows. Peptide chain release factor 1 directs the termination of translation in response to the peptide chain termination codons UAG and UAA. The protein is Peptide chain release factor 1 of Neisseria gonorrhoeae (strain ATCC 700825 / FA 1090).